Consider the following 227-residue polypeptide: Cytochrome c oxidase subunit 2 (227 aa).

The Mitochondrial intermembrane portion of the chain corresponds to 1-14 (MAYPMQLGFQDATS). The helical transmembrane segment at 15–45 (PIMEELLHFHDHTLMIVFLISSLVLYIISLM) threads the bilayer. The Mitochondrial matrix segment spans residues 46–59 (LTTKLTHTSTMDAQ). The chain crosses the membrane as a helical span at residues 60 to 87 (EVETIWTILPAIILIMIALPSLRILYMM). At 88–227 (DEINNPSLTV…YFEKWSASML (140 aa)) the chain is on the mitochondrial intermembrane side. Cys-196, Glu-198, Cys-200, His-204, and Met-207 together coordinate Cu cation. Mg(2+) is bound at residue Glu-198. Residue Tyr-218 is modified to Phosphotyrosine.

It belongs to the cytochrome c oxidase subunit 2 family. Component of the cytochrome c oxidase (complex IV, CIV), a multisubunit enzyme composed of 14 subunits. The complex is composed of a catalytic core of 3 subunits MT-CO1, MT-CO2 and MT-CO3, encoded in the mitochondrial DNA, and 11 supernumerary subunits COX4I, COX5A, COX5B, COX6A, COX6B, COX6C, COX7A, COX7B, COX7C, COX8 and NDUFA4, which are encoded in the nuclear genome. The complex exists as a monomer or a dimer and forms supercomplexes (SCs) in the inner mitochondrial membrane with NADH-ubiquinone oxidoreductase (complex I, CI) and ubiquinol-cytochrome c oxidoreductase (cytochrome b-c1 complex, complex III, CIII), resulting in different assemblies (supercomplex SCI(1)III(2)IV(1) and megacomplex MCI(2)III(2)IV(2)). Found in a complex with TMEM177, COA6, COX18, COX20, SCO1 and SCO2. Interacts with TMEM177 in a COX20-dependent manner. Interacts with COX20. Interacts with COX16. Cu cation serves as cofactor.

It is found in the mitochondrion inner membrane. The enzyme catalyses 4 Fe(II)-[cytochrome c] + O2 + 8 H(+)(in) = 4 Fe(III)-[cytochrome c] + 2 H2O + 4 H(+)(out). Functionally, component of the cytochrome c oxidase, the last enzyme in the mitochondrial electron transport chain which drives oxidative phosphorylation. The respiratory chain contains 3 multisubunit complexes succinate dehydrogenase (complex II, CII), ubiquinol-cytochrome c oxidoreductase (cytochrome b-c1 complex, complex III, CIII) and cytochrome c oxidase (complex IV, CIV), that cooperate to transfer electrons derived from NADH and succinate to molecular oxygen, creating an electrochemical gradient over the inner membrane that drives transmembrane transport and the ATP synthase. Cytochrome c oxidase is the component of the respiratory chain that catalyzes the reduction of oxygen to water. Electrons originating from reduced cytochrome c in the intermembrane space (IMS) are transferred via the dinuclear copper A center (CU(A)) of subunit 2 and heme A of subunit 1 to the active site in subunit 1, a binuclear center (BNC) formed by heme A3 and copper B (CU(B)). The BNC reduces molecular oxygen to 2 water molecules using 4 electrons from cytochrome c in the IMS and 4 protons from the mitochondrial matrix. This chain is Cytochrome c oxidase subunit 2 (MT-CO2), found in Ovis aries (Sheep).